The primary structure comprises 512 residues: Cytochrome P450 1A2 (512 aa).

Residue Ser65 is glycosylated (O-linked (GlcNAc) serine). Phe222 contacts substrate. Heme is bound at residue Cys454.

Belongs to the cytochrome P450 family. Interacts with PGRMC1; the interaction requires PGRMC1 homodimerization. The cofactor is heme. As to expression, constitutively expressed in liver.

It is found in the endoplasmic reticulum membrane. The protein localises to the microsome membrane. The catalysed reaction is an organic molecule + reduced [NADPH--hemoprotein reductase] + O2 = an alcohol + oxidized [NADPH--hemoprotein reductase] + H2O + H(+). The enzyme catalyses 17beta-estradiol + reduced [NADPH--hemoprotein reductase] + O2 = 2-hydroxy-17beta-estradiol + oxidized [NADPH--hemoprotein reductase] + H2O + H(+). It carries out the reaction 17beta-estradiol + reduced [NADPH--hemoprotein reductase] + O2 = 4-hydroxy-17beta-estradiol + oxidized [NADPH--hemoprotein reductase] + H2O + H(+). It catalyses the reaction estrone + reduced [NADPH--hemoprotein reductase] + O2 = 2-hydroxyestrone + oxidized [NADPH--hemoprotein reductase] + H2O + H(+). The catalysed reaction is estrone + reduced [NADPH--hemoprotein reductase] + O2 = 4-hydroxyestrone + oxidized [NADPH--hemoprotein reductase] + H2O + H(+). The enzyme catalyses cholesterol + reduced [NADPH--hemoprotein reductase] + O2 = 25-hydroxycholesterol + oxidized [NADPH--hemoprotein reductase] + H2O + H(+). It carries out the reaction all-trans-retinol + reduced [NADPH--hemoprotein reductase] + O2 = all-trans-retinal + oxidized [NADPH--hemoprotein reductase] + 2 H2O + H(+). It catalyses the reaction all-trans-retinal + reduced [NADPH--hemoprotein reductase] + O2 = all-trans-retinoate + oxidized [NADPH--hemoprotein reductase] + H2O + 2 H(+). The catalysed reaction is (5Z,8Z,11Z,14Z)-eicosatetraenoate + reduced [NADPH--hemoprotein reductase] + O2 = (14R,15S)-epoxy-(5Z,8Z,11Z)-eicosatrienoate + oxidized [NADPH--hemoprotein reductase] + H2O + H(+). The enzyme catalyses (5Z,8Z,11Z,14Z)-eicosatetraenoate + reduced [NADPH--hemoprotein reductase] + O2 = (14S,15R)-epoxy-(5Z,8Z,11Z)-eicosatrienoate + oxidized [NADPH--hemoprotein reductase] + H2O + H(+). It carries out the reaction (5Z,8Z,11Z,14Z,17Z)-eicosapentaenoate + reduced [NADPH--hemoprotein reductase] + O2 = (17R,18S)-epoxy-(5Z,8Z,11Z,14Z)-eicosatetraenoate + oxidized [NADPH--hemoprotein reductase] + H2O + H(+). It catalyses the reaction (4Z,7Z,10Z,13Z,16Z,19Z)-docosahexaenoate + reduced [NADPH--hemoprotein reductase] + O2 = (19R,20S)-epoxy-(4Z,7Z,10Z,13Z,16Z)-docosapentaenoate + oxidized [NADPH--hemoprotein reductase] + H2O + H(+). The catalysed reaction is (5S)-hydroperoxy-(6E,8Z,11Z,14Z)-eicosatetraenoate = 5-oxo-(6E,8Z,11Z,14Z)-eicosatetraenoate + H2O. The enzyme catalyses (12S)-hydroperoxy-(5Z,8Z,10E,14Z)-eicosatetraenoate = 12-oxo-(5Z,8Z,10E,14Z)-eicosatetraenoate + H2O. It carries out the reaction (15S)-hydroperoxy-(5Z,8Z,11Z,13E)-eicosatetraenoate = 15-oxo-(5Z,8Z,11Z,13E)-eicosatetraenoate + H2O. It catalyses the reaction (13S)-hydroperoxy-(9Z,11E)-octadecadienoate = 13-oxo-(9Z,11E)-octadecadienoate + H2O. The catalysed reaction is (5Z,8Z,11Z,14Z)-eicosatetraenoate + reduced [NADPH--hemoprotein reductase] + O2 = 13-hydroxy-(5Z,8Z,11Z,14Z)-eicosatetraenoate + oxidized [NADPH--hemoprotein reductase] + H2O + H(+). The enzyme catalyses (5Z,8Z,11Z,14Z)-eicosatetraenoate + reduced [NADPH--hemoprotein reductase] + O2 = 19-hydroxy-(5Z,8Z,11Z,14Z)-eicosatetraenoate + oxidized [NADPH--hemoprotein reductase] + H2O + H(+). It carries out the reaction (9Z,12Z)-octadecadienoate + reduced [NADPH--hemoprotein reductase] + O2 = 11-hydroxy-(9Z,12Z)-octadecadienoate + oxidized [NADPH--hemoprotein reductase] + H2O + H(+). It functions in the pathway cofactor metabolism; retinol metabolism. The protein operates within steroid metabolism; cholesterol metabolism. It participates in lipid metabolism; arachidonate metabolism. Its function is as follows. A cytochrome P450 monooxygenase involved in the metabolism of various endogenous substrates, including fatty acids, steroid hormones and vitamins. Mechanistically, uses molecular oxygen inserting one oxygen atom into a substrate, and reducing the second into a water molecule, with two electrons provided by NADPH via cytochrome P450 reductase (NADPH--hemoprotein reductase). Catalyzes the hydroxylation of carbon-hydrogen bonds. Exhibits high catalytic activity for the formation of hydroxyestrogens from estrone (E1) and 17beta-estradiol (E2), namely 2-hydroxy E1 and E2. Metabolizes cholesterol toward 25-hydroxycholesterol, a physiological regulator of cellular cholesterol homeostasis. May act as a major enzyme for all-trans retinoic acid biosynthesis in the liver. Catalyzes two successive oxidative transformation of all-trans retinol to all-trans retinal and then to the active form all-trans retinoic acid. Primarily catalyzes stereoselective epoxidation of the last double bond of polyunsaturated fatty acids (PUFA), displaying a strong preference for the (R,S) stereoisomer. Catalyzes bisallylic hydroxylation and omega-1 hydroxylation of PUFA. May also participate in eicosanoids metabolism by converting hydroperoxide species into oxo metabolites (lipoxygenase-like reaction, NADPH-independent). Plays a role in the oxidative metabolism of xenobiotics. Catalyzes the N-hydroxylation of heterocyclic amines and the O-deethylation of phenacetin. Metabolizes caffeine via N3-demethylation. In Canis lupus familiaris (Dog), this protein is Cytochrome P450 1A2 (CYP1A2).